The following is a 35-amino-acid chain: Photosystem II reaction center protein T (35 aa).

Residues 3-23 (ALVYTFLLVSTLGIIFFAIFF) form a helical membrane-spanning segment.

It belongs to the PsbT family. PSII is composed of 1 copy each of membrane proteins PsbA, PsbB, PsbC, PsbD, PsbE, PsbF, PsbH, PsbI, PsbJ, PsbK, PsbL, PsbM, PsbT, PsbY, PsbZ, Psb30/Ycf12, at least 3 peripheral proteins of the oxygen-evolving complex and a large number of cofactors. It forms dimeric complexes.

It is found in the plastid. The protein localises to the chloroplast thylakoid membrane. In terms of biological role, found at the monomer-monomer interface of the photosystem II (PS II) dimer, plays a role in assembly and dimerization of PSII. PSII is a light-driven water plastoquinone oxidoreductase, using light energy to abstract electrons from H(2)O, generating a proton gradient subsequently used for ATP formation. This chain is Photosystem II reaction center protein T, found in Stangeria eriopus (Natal grass cycad).